Reading from the N-terminus, the 480-residue chain is Protein nucleotidyltransferase YdiU (480 aa).

8 residues coordinate ATP: G86, G88, R89, K109, D121, G122, R172, and R179. Catalysis depends on D248, which acts as the Proton acceptor. Mg(2+) contacts are provided by N249 and D258. D258 contacts ATP.

It belongs to the SELO family. Requires Mg(2+) as cofactor. It depends on Mn(2+) as a cofactor.

It catalyses the reaction L-seryl-[protein] + ATP = 3-O-(5'-adenylyl)-L-seryl-[protein] + diphosphate. The catalysed reaction is L-threonyl-[protein] + ATP = 3-O-(5'-adenylyl)-L-threonyl-[protein] + diphosphate. The enzyme catalyses L-tyrosyl-[protein] + ATP = O-(5'-adenylyl)-L-tyrosyl-[protein] + diphosphate. It carries out the reaction L-histidyl-[protein] + UTP = N(tele)-(5'-uridylyl)-L-histidyl-[protein] + diphosphate. It catalyses the reaction L-seryl-[protein] + UTP = O-(5'-uridylyl)-L-seryl-[protein] + diphosphate. The catalysed reaction is L-tyrosyl-[protein] + UTP = O-(5'-uridylyl)-L-tyrosyl-[protein] + diphosphate. Functionally, nucleotidyltransferase involved in the post-translational modification of proteins. It can catalyze the addition of adenosine monophosphate (AMP) or uridine monophosphate (UMP) to a protein, resulting in modifications known as AMPylation and UMPylation. This is Protein nucleotidyltransferase YdiU from Klebsiella pneumoniae subsp. pneumoniae (strain ATCC 700721 / MGH 78578).